Reading from the N-terminus, the 772-residue chain is Metabotropic glutamate receptor-like protein G (772 aa).

The first 23 residues, 1-23 (MKKIIFLVLFLIFIFKDIKSSYG), serve as a signal peptide directing secretion. At 24-391 (VDLVNFKMIT…TQVKFSPSIQ (368 aa)) the chain is on the extracellular side. 6 N-linked (GlcNAc...) asparagine glycosylation sites follow: asparagine 73, asparagine 126, asparagine 262, asparagine 313, asparagine 343, and asparagine 378. The chain crosses the membrane as a helical span at residues 392–412 (IGVSIVSGVLIAIVLLSMVGV). Over 413–426 (YKYRASSSIRSASP) the chain is Cytoplasmic. A helical membrane pass occupies residues 427 to 447 (IFLIFILFGALIVFGGIILWV). The Extracellular segment spans residues 448 to 463 (SELNDHVCNGRLWMVT). A helical transmembrane segment spans residues 464–484 (LGFSTLIGSLVVKNFRIWLIF). Residues 485–500 (DNPELKTVKITNYQLY) lie on the Cytoplasmic side of the membrane. The chain crosses the membrane as a helical span at residues 501–521 (PWVACCLVINIILMSILTSLG). Topologically, residues 522-551 (DLREVDATGIDSLGKYEFLKICKMNNSGAS) are extracellular. Asparagine 546 carries N-linked (GlcNAc...) asparagine glycosylation. The helical transmembrane segment at 552 to 572 (VLYTILAYFGALLLTGVFVSW) threads the bilayer. Topologically, residues 573 to 586 (KIRIVDIEEFNESR) are cytoplasmic. Residues 587–607 (AIAHTLYAISFCLFVIVPLMI) traverse the membrane as a helical segment. The Extracellular segment spans residues 608–616 (SPLEKQSET). A helical transmembrane segment spans residues 617–637 (IILSVAGLFITTAAVLIIFLP). The Cytoplasmic segment spans residues 638-772 (KFYRVYEYGE…QIEPDEKNQD (135 aa)). Residues 664-772 (TARAESHKSS…QIEPDEKNQD (109 aa)) are disordered. Residues 718 to 728 (FTEESVSEIDE) are compositionally biased toward acidic residues. The span at 740-753 (PEINQSEQQNSEIE) shows a compositional bias: low complexity. A compositionally biased stretch (pro residues) spans 754–763 (QPPPPPPPQQ).

The protein in the N-terminal section; belongs to the BMP lipoprotein family. In the C-terminal section; belongs to the G-protein coupled receptor 3 family. GABA-B receptor subfamily.

It is found in the membrane. The polypeptide is Metabotropic glutamate receptor-like protein G (grlG) (Dictyostelium discoideum (Social amoeba)).